A 607-amino-acid polypeptide reads, in one-letter code: UvrABC system protein C (607 aa).

The GIY-YIG domain occupies 16–94 (GRPGVYRMFD…IKEWRPPYNI (79 aa)). The region spanning 203 to 238 (NALSDELNASMEKAAMALDFERAAELRDQVALLRRV) is the UVR domain.

The protein belongs to the UvrC family. As to quaternary structure, interacts with UvrB in an incision complex.

The protein localises to the cytoplasm. Its function is as follows. The UvrABC repair system catalyzes the recognition and processing of DNA lesions. UvrC both incises the 5' and 3' sides of the lesion. The N-terminal half is responsible for the 3' incision and the C-terminal half is responsible for the 5' incision. The chain is UvrABC system protein C from Pseudomonas syringae pv. syringae (strain B728a).